A 131-amino-acid polypeptide reads, in one-letter code: Peptidyl-prolyl cis-trans isomerase NIMA-interacting 4 (131 aa).

The necessary for nuclear localization and DNA-binding stretch occupies residues 1 to 25 (MPPKGKSGSGKGGKGGAASGSDSAD). The interval 1-39 (MPPKGKSGSGKGGKGGAASGSDSADKKSQGPKGGGNAVK) is disordered. The tract at residues 1–41 (MPPKGKSGSGKGGKGGAASGSDSADKKSQGPKGGGNAVKVR) is necessary for association with the pre-rRNP complexes. Positions 7–18 (SGSGKGGKGGAA) are enriched in gly residues. The residue at position 19 (Ser-19) is a Phosphoserine; by CK2. One can recognise a PpiC domain in the interval 35 to 129 (GNAVKVRHIL…FGYHIIMVEG (95 aa)).

Belongs to the PpiC/parvulin rotamase family. PIN4 subfamily. In terms of assembly, found in pre-ribosomal ribonucleoprotein (pre-rRNP) complexes. Phosphorylated. Phosphorylation occurs both in the nucleus and the cytoplasm. Phosphorylation at Ser-19 does not affect its PPIase activity but is required for nuclear localization, and the dephosphorylation is a prerequisite for the binding to DNA. The unphosphorylated form associates with the pre-rRNP complexes in the nucleus.

The protein resides in the nucleus. It is found in the nucleolus. Its subcellular location is the cytoplasm. The protein localises to the cytoskeleton. It localises to the spindle. It catalyses the reaction [protein]-peptidylproline (omega=180) = [protein]-peptidylproline (omega=0). Involved as a ribosomal RNA processing factor in ribosome biogenesis. Binds to tightly bent AT-rich stretches of double-stranded DNA. The protein is Peptidyl-prolyl cis-trans isomerase NIMA-interacting 4 (Pin4) of Mus musculus (Mouse).